The primary structure comprises 459 residues: MNRLPSSASALACSAHALNLIEKRTLDHEEMKALNREVIEYFKEHVNPGFLEYRKSVTAGGDYGAVEWQAGGLNTLVDTQGQEFIDCLGGFGIFNVGHRNPVVVSAVQNQLAKQPLHSQELLDPLRAMLAKTVAALTPGKLKYSFFCNSGTESVEAALKLAKAYQSPRGKFTFIATSGAFHGKSLGALSATAKSTFRKPFMPLLPGFRHVPFGNIEAMRTALNECKKTGDDVAAVILEPIQGEGGVILPPPGYLTAVRKLCDEFGALMILDEVQTGMGRTGKMFACEHENVQPDILCLAKALGGGVMPIGATIATEEVFSVLFDNPFLHTTTFGGNPLACAAALATINVLLEQNLPAQAEQKGDMLLDGFRQLAREYPDLVQEARGKGMLMAIEFVDNEIGYNFASEMFRQRVLVAGTLNNAKTIRIEPPLTLTIEQCELVIKAAHKALAAMRVSVEEA.

Pyridoxal 5'-phosphate is bound by residues 150–151 (GT) and Q274. K300 is subject to N6-(pyridoxal phosphate)lysine. T332 serves as a coordination point for pyridoxal 5'-phosphate.

The protein belongs to the class-III pyridoxal-phosphate-dependent aminotransferase family. Putrescine aminotransferase subfamily. Pyridoxal 5'-phosphate serves as cofactor.

The enzyme catalyses an alkane-alpha,omega-diamine + 2-oxoglutarate = an omega-aminoaldehyde + L-glutamate. It catalyses the reaction putrescine + 2-oxoglutarate = 1-pyrroline + L-glutamate + H2O. It carries out the reaction cadaverine + 2-oxoglutarate = 5-aminopentanal + L-glutamate. The protein operates within amine and polyamine degradation; putrescine degradation; 4-aminobutanal from putrescine (transaminase route): step 1/1. Catalyzes the aminotransferase reaction from putrescine to 2-oxoglutarate, leading to glutamate and 4-aminobutanal, which spontaneously cyclizes to form 1-pyrroline. This is the first step in one of two pathways for putrescine degradation, where putrescine is converted into 4-aminobutanoate (gamma-aminobutyrate or GABA) via 4-aminobutanal. Also functions as a cadaverine transaminase in a a L-lysine degradation pathway to succinate that proceeds via cadaverine, glutarate and L-2-hydroxyglutarate. The polypeptide is Putrescine aminotransferase (Escherichia coli O8 (strain IAI1)).